Here is a 330-residue protein sequence, read N- to C-terminus: Aspartate--ammonia ligase (330 aa).

This sequence belongs to the class-II aminoacyl-tRNA synthetase family. AsnA subfamily. Homodimer.

The protein localises to the cytoplasm. The catalysed reaction is L-aspartate + NH4(+) + ATP = L-asparagine + AMP + diphosphate + H(+). It functions in the pathway amino-acid biosynthesis; L-asparagine biosynthesis; L-asparagine from L-aspartate (ammonia route): step 1/1. The chain is Aspartate--ammonia ligase from Salmonella typhimurium (strain LT2 / SGSC1412 / ATCC 700720).